A 158-amino-acid polypeptide reads, in one-letter code: Dihydroneopterin triphosphate diphosphatase (158 aa).

Substrate contacts are provided by Lys-14, Arg-36, and Thr-47. Positions Lys-14–Leu-153 constitute a Nudix hydrolase domain. A Nudix box motif is present at residues Gly-48–Arg-69. Mg(2+) contacts are provided by Glu-63 and Glu-67. Phe-88–Phe-91 is a substrate binding site. Residue Glu-124 participates in Mg(2+) binding. Ser-142 serves as a coordination point for substrate.

Belongs to the Nudix hydrolase family. Requires Mg(2+) as cofactor.

The enzyme catalyses 7,8-dihydroneopterin 3'-triphosphate + H2O = 7,8-dihydroneopterin 3'-phosphate + diphosphate + H(+). Functionally, catalyzes the hydrolysis of dihydroneopterin triphosphate to dihydroneopterin monophosphate and pyrophosphate. Required for efficient folate biosynthesis. Can also hydrolyze nucleoside triphosphates with a preference for dATP. The protein is Dihydroneopterin triphosphate diphosphatase (nudB) of Haemophilus influenzae (strain ATCC 51907 / DSM 11121 / KW20 / Rd).